Here is a 159-residue protein sequence, read N- to C-terminus: uncharacterized protein (159 aa).

3 helical membrane-spanning segments follow: residues 16–36, 84–104, and 112–132; these read IVLP…AFIF, VYAG…LLII, and VFFY…LLPV.

The protein resides in the cell membrane. This is an uncharacterized protein from Bacillus subtilis (strain 168).